A 157-amino-acid polypeptide reads, in one-letter code: Ribonuclease 8 (157 aa).

A signal peptide spans 1-30; sequence MAPARAGCCPLLLLLLLLLGLWVAEVLVSA. The Proton acceptor role is filled by H45. 4 disulfides stabilise this stretch: C53–C96, C67–C121, C85–C136, and C92–C99. Residues 68-72 and K93 each bind substrate; that span reads KDLNT. H152 acts as the Proton donor in catalysis.

It belongs to the pancreatic ribonuclease family.

Its subcellular location is the secreted. In terms of biological role, has a low ribonuclease activity. This Pan troglodytes (Chimpanzee) protein is Ribonuclease 8 (RNASE8).